A 560-amino-acid polypeptide reads, in one-letter code: Endogenous retrovirus group K member 18 Env polyprotein (560 aa).

Residues 355–375 form a fusion peptide region; the sequence is FIFTLIAVIMGLIAVTATAAV. Residues 522–542 traverse the membrane as a helical segment; that stretch reads IRSTMIINLILIVVCLFCLLL.

Belongs to the beta type-B retroviral envelope protein family. HERV class-II K(HML-2) env subfamily. The surface (SU) and transmembrane (TM) proteins form a heterodimer. SU and TM are attached by noncovalent interactions or by a labile interchain disulfide bond. Post-translationally, specific enzymatic cleavages in vivo yield the mature SU and TM proteins. In terms of tissue distribution, expressed at higher level in the thymus. Expressed at lower level in peripheral blood lymphocytes.

The protein localises to the cell membrane. Its subcellular location is the virion. In terms of biological role, retroviral envelope proteins mediate receptor recognition and membrane fusion during early infection. Endogenous envelope proteins may have kept, lost or modified their original function during evolution. This envelope protein has superantigenic properties. Its function is as follows. SU mediates receptor recognition. Functionally, TM anchors the envelope heterodimer to the viral membrane through one transmembrane domain. The other hydrophobic domain, called fusion peptide, mediates fusion of the viral membrane with the target cell membrane. In Homo sapiens (Human), this protein is Endogenous retrovirus group K member 18 Env polyprotein (ERVK-18).